A 329-amino-acid chain; its full sequence is Protein-arginine N-acetylglucosaminyltransferase NleB1 (329 aa).

N-beta-linked (GlcNAc) arginine; by autocatalysis glycosylation occurs at R13. UDP-N-acetyl-alpha-D-glucosamine is bound at residue 48-50; that stretch reads QWF. Residue R53 is glycosylated (N-beta-linked (GlcNAc) arginine; by autocatalysis). Y72 contributes to the UDP-N-acetyl-alpha-D-glucosamine binding site. R159 is a glycosylation site (N-beta-linked (GlcNAc) arginine; by autocatalysis). A UDP-N-acetyl-alpha-D-glucosamine-binding site is contributed by 219–222; that stretch reads YLDA. Residues 221–223 carry the DXD motif motif; it reads DAD. D223 lines the Mn(2+) pocket. Residue E253 is the Proton acceptor of the active site. A glycan (N-beta-linked (GlcNAc) arginine; by autocatalysis) is linked at R293. The Mn(2+) site is built by N320 and S322. UDP-N-acetyl-alpha-D-glucosamine is bound by residues S322 and 327–329; that span reads SSW.

This sequence belongs to the glycosyltransferase NleB family. It depends on Mn(2+) as a cofactor. Auto-glycosylated: arginine GlcNAcylation is required for activity toward death domain-containing host target proteins.

It is found in the secreted. The protein localises to the host cytoplasm. It catalyses the reaction L-arginyl-[protein] + UDP-N-acetyl-alpha-D-glucosamine = N(omega)-(N-acetyl-beta-D-glucosaminyl)-L-arginyl-[protein] + UDP + H(+). With respect to regulation, protein-arginine N-acetylglucosaminyltransferase activity is inhibited by 100066N compound (flavone analog) and 102644N compound (a substituted isoxazole). In terms of biological role, protein-arginine N-acetylglucosaminyltransferase effector that disrupts TNF signaling in infected cells, including NF-kappa-B signaling, apoptosis and necroptosis. Acts by catalyzing the transfer of a single N-acetylglucosamine (GlcNAc) to a conserved arginine residue in the death domain of host proteins such as FADD: arginine GlcNAcylation prevents homotypic/heterotypic death domain interactions and assembly of the oligomeric TNF-alpha receptor complex, thereby disrupting TNF signaling. Also acts on host proteins without a death domain: catalyzes arginine GlcNAcylation of host GAPDH protein, thereby preventing GAPDH interaction with TRAF2, leading to inhibit NF-kappa-B signaling. Catalyzes auto-GlcNAcylation, which is required for activity toward death domain-containing host target proteins. The chain is Protein-arginine N-acetylglucosaminyltransferase NleB1 from Escherichia coli O157:H7.